We begin with the raw amino-acid sequence, 211 residues long: Uracil phosphoribosyltransferase (211 aa).

Residues R78, R103, and 130 to 138 (DPMLATGNS) contribute to the 5-phospho-alpha-D-ribose 1-diphosphate site. Uracil is bound by residues I193 and 198–200 (GDA). D199 is a binding site for 5-phospho-alpha-D-ribose 1-diphosphate.

Belongs to the UPRTase family. The cofactor is Mg(2+).

The enzyme catalyses UMP + diphosphate = 5-phospho-alpha-D-ribose 1-diphosphate + uracil. Its pathway is pyrimidine metabolism; UMP biosynthesis via salvage pathway; UMP from uracil: step 1/1. Allosterically activated by GTP. Functionally, catalyzes the conversion of uracil and 5-phospho-alpha-D-ribose 1-diphosphate (PRPP) to UMP and diphosphate. In Acinetobacter baumannii (strain ATCC 17978 / DSM 105126 / CIP 53.77 / LMG 1025 / NCDC KC755 / 5377), this protein is Uracil phosphoribosyltransferase.